The sequence spans 515 residues: Spermatogenesis-associated protein 2 (515 aa).

The PUB domain maps to 78–150 (ALHCAFSMLE…VYKLKELVES (73 aa)). The PIM motif motif lies at 321–338 (TYFSTQDDVDLYTDSEPR). Positions 429–452 (GHQTQGLDRLAPVHSKPKPSTTAT) are disordered.

This sequence belongs to the SPATA2 family. In terms of assembly, interacts (via the PIM motif) with RNF31/HOIP (via the PUB domain); the interaction is direct. Interacts (via the PUB domain) with CYLD; the interaction is direct. In terms of tissue distribution, widely expressed, with highest expression in testis, lung and intestine, and lower expression in brain, heart and spleen. Present at high level in Sertoli cells: expressed from stage I to stage XII of the testis seminiferous epithelium (at protein level).

It localises to the cytoplasm. Its subcellular location is the nucleus. Functionally, bridging factor that mediates the recruitment of CYLD to the LUBAC complex, thereby regulating TNF-alpha-induced necroptosis. Acts as a direct binding intermediate that bridges RNF31/HOIP, the catalytic subunit of the LUBAC complex, and the deubiquitinase (CYLD), thereby recruiting CYLD to the TNF-R1 signaling complex (TNF-RSC). Required to activate the 'Met-1'- (linear) and 'Lys-63'-linked deubiquitinase activities of CYLD. Controls the kinase activity of RIPK1 and TNF-alpha-induced necroptosis by promoting 'Met-1'-linked deubiquitination of RIPK1 by CYLD. This is Spermatogenesis-associated protein 2 from Mus musculus (Mouse).